Reading from the N-terminus, the 237-residue chain is Aspartate/glutamate leucyltransferase (237 aa).

Belongs to the R-transferase family. Bpt subfamily.

The protein localises to the cytoplasm. The catalysed reaction is N-terminal L-glutamyl-[protein] + L-leucyl-tRNA(Leu) = N-terminal L-leucyl-L-glutamyl-[protein] + tRNA(Leu) + H(+). It catalyses the reaction N-terminal L-aspartyl-[protein] + L-leucyl-tRNA(Leu) = N-terminal L-leucyl-L-aspartyl-[protein] + tRNA(Leu) + H(+). Its function is as follows. Functions in the N-end rule pathway of protein degradation where it conjugates Leu from its aminoacyl-tRNA to the N-termini of proteins containing an N-terminal aspartate or glutamate. This Marinobacter nauticus (strain ATCC 700491 / DSM 11845 / VT8) (Marinobacter aquaeolei) protein is Aspartate/glutamate leucyltransferase.